The following is a 451-amino-acid chain: Opioid growth factor receptor-like protein 1 (451 aa).

2 disordered regions span residues 1–89 (MGNL…TAKP) and 308–451 (ENFI…VLVQ). The segment covering 43 to 66 (PGQESEQPAQPPEQAGGRPGASPA) has biased composition (low complexity). The span at 322-341 (GSKAQKMSSPLASSHNSQTS) shows a compositional bias: polar residues. 2 stretches are compositionally biased toward basic and acidic residues: residues 362 to 381 (TAEDKKVAPKEPVEETDRPS) and 389 to 399 (AKPRNTEKDSN). Residues 431 to 443 (NDNQDNENPGNTN) are compositionally biased toward low complexity.

Belongs to the opioid growth factor receptor family. In terms of tissue distribution, ubiquitous.

This is Opioid growth factor receptor-like protein 1 (OGFRL1) from Homo sapiens (Human).